The chain runs to 143 residues: Ribonuclease H (143 aa).

An RNase H type-1 domain is found at M1–Q136. 4 residues coordinate Mg(2+): D9, E47, D69, and D128.

The protein belongs to the RNase H family. In terms of assembly, monomer. Mg(2+) serves as cofactor.

It localises to the cytoplasm. The enzyme catalyses Endonucleolytic cleavage to 5'-phosphomonoester.. Functionally, endonuclease that specifically degrades the RNA of RNA-DNA hybrids. The sequence is that of Ribonuclease H from Helicobacter pylori (strain HPAG1).